The sequence spans 300 residues: Inosose dehydratase (300 aa).

This sequence belongs to the IolE/MocC family. Glutathione serves as cofactor. Requires Co(2+) as cofactor. The cofactor is Mn(2+).

The enzyme catalyses scyllo-inosose = 3D-3,5/4-trihydroxycyclohexane-1,2-dione + H2O. It functions in the pathway polyol metabolism; myo-inositol degradation into acetyl-CoA; acetyl-CoA from myo-inositol: step 2/7. Catalyzes the dehydration of inosose (2-keto-myo-inositol, 2KMI or 2,4,6/3,5-pentahydroxycyclohexanone) to 3D-(3,5/4)-trihydroxycyclohexane-1,2-dione (D-2,3-diketo-4-deoxy-epi-inositol). This is Inosose dehydratase from Lactiplantibacillus plantarum (strain ATCC BAA-793 / NCIMB 8826 / WCFS1) (Lactobacillus plantarum).